A 632-amino-acid polypeptide reads, in one-letter code: Golgin subfamily A member 8M (632 aa).

Positions Met-1–Ser-77 are disordered. Over residues Thr-38–Gly-50 the composition is skewed to polar residues. Coiled coils occupy residues Leu-86–Arg-154 and Lys-209–Ala-421. A compositionally biased stretch (basic and acidic residues) spans Lys-352–Lys-362. Disordered stretches follow at residues Lys-352–Thr-384, Leu-422–Met-456, and Asp-505–Glu-524. The segment covering Leu-508–Gly-520 has biased composition (gly residues).

Belongs to the GOLGA8 family.

This Homo sapiens (Human) protein is Golgin subfamily A member 8M.